The sequence spans 240 residues: MGLEVAADSVGSALAAQDGGAIRVELCGGLDGGGLTPSFGTLAVVRERLQIPLYVLIRPRVGDFVFDAAEVEVMRRDVEQCVRLGCDGVVLGALDLQGQVDLPAMRALIEAAGTLGVTFHRAIDVSADPARVLEDAIALGCERVLTSGARASALEGVETIAALVRQAGERISIMPGAGVSAANVQALRAGTGAREFHASARGPVAAQVHAPHPYITDLGGDYQRTDVARVRSIVQLLQTA.

The protein belongs to the CutC family.

The protein localises to the cytoplasm. The chain is PF03932 family protein CutC from Xanthomonas campestris pv. campestris (strain B100).